The chain runs to 922 residues: Lysine-specific demethylase 4 (922 aa).

Over residues 1-15 (MASAATTTHFPSSRI) the composition is skewed to polar residues. 2 disordered regions span residues 1 to 21 (MASA…EPCA) and 42 to 61 (SSSC…MFTD). The JmjN domain maps to 87–130 (VLTFYPTMREFKNFSQYIKKIEQNGGHLKAGIAKIVAPEGWTPR). Y213 is a binding site for 2-oxoglutarate. One can recognise a JmjC domain in the interval 223–388 (DAQVEEWNMN…YGKDAVLCDC (166 aa)). 2 residues coordinate Fe cation: H265 and E267. 2-oxoglutarate contacts are provided by N275 and K283. Residues C314 and H320 each contribute to the Zn(2+) site. K321 serves as a coordination point for 2-oxoglutarate. H356 is a Fe cation binding site. Residues C386 and C388 each coordinate Zn(2+). Residues 435 to 475 (KRRQSLADASKIAKRARLGASSTATDSDGSSGSSGSEEATE) form a disordered region. A compositionally biased stretch (low complexity) spans 453 to 475 (GASSTATDSDGSSGSSGSEEATE). A C2HC pre-PHD-type zinc finger spans residues 639 to 675 (TTSCQLCELRGGALIPCQIGTDSTWAHVACALFNRRA). The PHD-type; degenerate zinc-finger motif lies at 723-783 (WECVVCHRTD…GVVMICHKHE (61 aa)).

The protein belongs to the JHDM3 histone demethylase family. It depends on Fe(2+) as a cofactor.

The protein resides in the nucleus. It catalyses the reaction N(6),N(6),N(6)-trimethyl-L-lysyl(9)-[histone H3] + 2 2-oxoglutarate + 2 O2 = N(6)-methyl-L-lysyl(9)-[histone H3] + 2 formaldehyde + 2 succinate + 2 CO2. The catalysed reaction is N(6),N(6),N(6)-trimethyl-L-lysyl(36)-[histone H3] + 2 2-oxoglutarate + 2 O2 = N(6)-methyl-L-lysyl(36)-[histone H3] + 2 formaldehyde + 2 succinate + 2 CO2. In terms of biological role, histone demethylase that specifically demethylates 'Lys-9' and 'Lys-36' residues of histone H3, thereby playing a central role in histone code. Demethylation of Lys residue generates formaldehyde and succinate. Involved in the negative regulation of lifespan in a germline-dependent fashion. This chain is Lysine-specific demethylase 4 (jmjd-2), found in Caenorhabditis elegans.